We begin with the raw amino-acid sequence, 2464 residues long: Highly reducing polyketide synthase xilA (2464 aa).

The region spanning 9–437 is the Ketosynthase family 3 (KS3) domain; it reads HDPIALVGIG…GTNGHCIIDH (429 aa). Catalysis depends on for beta-ketoacyl synthase activity residues cysteine 182, histidine 318, and histidine 360. Low complexity predominate over residues 461–487; that stretch reads QNGINGTNGTNGTNGTNGTNGTNGTNG. Positions 461 to 495 are disordered; it reads QNGINGTNGTNGTNGTNGTNGTNGTNGHHNPKTEA. Positions 589–911 constitute a Malonyl-CoA:ACP transacylase (MAT) domain; that stretch reads FIFTGQGAQW…LKRNEDAQRL (323 aa). Residues 983 to 1121 form an N-terminal hotdog fold region; the sequence is HDLLGSKVPG…GQIKIEVSTF (139 aa). In terms of domain architecture, PKS/mFAS DH spans 983–1286; it reads HDLLGSKVPG…FTSLNNEQES (304 aa). The Proton acceptor; for dehydratase activity role is filled by histidine 1015. The tract at residues 1133–1286 is C-terminal hotdog fold; the sequence is GRLVDAQTWY…FTSLNNEQES (154 aa). Residue aspartate 1199 is the Proton donor; for dehydratase activity of the active site. The tract at residues 1282–1490 is methyltransferase (CMeT) domain; sequence NEQESTSTGD…TEPAHHSTIT (209 aa). The region spanning 1716-2028 is the Enoyl reductase (ER) domain; the sequence is GILTSLYFKP…KGTHIGKMVI (313 aa). Residues 2052 to 2231 form the Ketoreductase (KR) domain; that stretch reads ANYILVGGMS…ATTVSLGFIN (180 aa). The region spanning 2383–2461 is the Carrier domain; the sequence is ETVTFVTDAI…SIAQVIVEEA (79 aa). Serine 2420 bears the O-(pantetheine 4'-phosphoryl)serine mark.

The cofactor is pantetheine 4'-phosphate.

It participates in secondary metabolite biosynthesis. Highly reducing polyketide synthase; part of the gene cluster that mediates the biosynthesis of the 6-methyl-2-pyrone derivative xylariolide D. XilA produces the 5-alkyl-6-methyl-2-pyrone backbone called prexylariolide D via sequential condensations of 4 malonyl-CoA units with one acetyl-CoA starter unit. During the biosynthesis, the linear polyketide chain is branched by the addition of an acetyl unit as the origin of the methyl group at the 2-pyrone ring. Prexylariolide D is then hydroxylated at the side chain by xilC to form the final product, xylariolide D. The chain is Highly reducing polyketide synthase xilA from Penicillium rubens (strain ATCC 28089 / DSM 1075 / NRRL 1951 / Wisconsin 54-1255) (Penicillium chrysogenum).